The sequence spans 137 residues: MLVPKRVKHRREFRGKMRGEAKGGKEVSFGEYGLQATTSHWITNRQIEAARIAMTRYMKRGGKVWIKIFPHKSYTAKAIGVRMGSGKGAPEGWVAPVKRGKVMFEIAGVSEEVAREALRLASHKLPVKCKFVKREAE.

It belongs to the universal ribosomal protein uL16 family. As to quaternary structure, part of the 50S ribosomal subunit.

Its function is as follows. Binds 23S rRNA and is also seen to make contacts with the A and possibly P site tRNAs. In Streptococcus agalactiae serotype Ia (strain ATCC 27591 / A909 / CDC SS700), this protein is Large ribosomal subunit protein uL16.